A 210-amino-acid chain; its full sequence is Urease accessory protein UreF (210 aa).

It belongs to the UreF family. UreD, UreF and UreG form a complex that acts as a GTP-hydrolysis-dependent molecular chaperone, activating the urease apoprotein by helping to assemble the nickel containing metallocenter of UreC. The UreE protein probably delivers the nickel.

Its subcellular location is the cytoplasm. Its function is as follows. Required for maturation of urease via the functional incorporation of the urease nickel metallocenter. This is Urease accessory protein UreF from Cereibacter sphaeroides (strain KD131 / KCTC 12085) (Rhodobacter sphaeroides).